The primary structure comprises 802 residues: E3 ubiquitin-protein ligase RNF10 (802 aa).

3 stretches are compositionally biased toward low complexity: residues 1-31 (MPQSSPSTAATASDMDKNSGSNSSSASSGSS), 78-90 (SNQSRRSNSQKSK), and 104-113 (SKPFSSSSNG). The interval 1 to 134 (MPQSSPSTAA…AEFSPAQFSG (134 aa)) is disordered. Serine 5 carries the phosphoserine modification. Serine 110 is modified (phosphoserine). A compositionally biased stretch (basic and acidic residues) spans 114–124 (GRRDEVAEAQR). Serine 128 bears the Phosphoserine mark. The RING-type zinc-finger motif lies at 225–267 (CPICLYPPTAAKITRCGHIFCWACILHYLSLSERTWSKCPICY). Positions 645-654 (DSALGPTSTE) are enriched in polar residues. Disordered regions lie at residues 645-664 (DSALGPTSTEGHGALSLSPL), 716-753 (DGWPKAAPKKDDNSLAPPAPVDSDGESDNSDRVPVPSF), and 767-802 (KLDTPATSDPLSDRGGRKRKRQKQKLLFSTSVVHTK). Over residues 716-728 (DGWPKAAPKKDDN) the composition is skewed to basic and acidic residues. The span at 793-802 (LFSTSVVHTK) shows a compositional bias: polar residues.

This sequence belongs to the RNF10 family. In terms of assembly, interacts with MEOX2.

It is found in the cytoplasm. The protein localises to the nucleus. The catalysed reaction is S-ubiquitinyl-[E2 ubiquitin-conjugating enzyme]-L-cysteine + [acceptor protein]-L-lysine = [E2 ubiquitin-conjugating enzyme]-L-cysteine + N(6)-ubiquitinyl-[acceptor protein]-L-lysine.. Its pathway is protein modification; protein ubiquitination. E3 ubiquitin-protein ligase that catalyzes monoubiquitination of 40S ribosomal proteins RPS2/us5 and RPS3/us3 in response to ribosome stalling. Part of a ribosome quality control that takes place when ribosomes have stalled during translation initiation (iRQC): RNF10 acts by mediating monoubiquitination of RPS2/us5 and RPS3/us3, promoting their degradation by the proteasome. Also promotes ubiquitination of 40S ribosomal proteins in response to ribosome stalling during translation elongation. The action of RNF10 in iRQC is counteracted by USP10. May also act as a transcriptional factor involved in the regulation of MAG (Myelin-associated glycoprotein) expression. Acts as a regulator of Schwann cell differentiation and myelination. The sequence is that of E3 ubiquitin-protein ligase RNF10 from Rattus norvegicus (Rat).